A 316-amino-acid chain; its full sequence is Protoheme IX farnesyltransferase (316 aa).

9 helical membrane passes run 32-52 (VMSL…GHIH), 53-73 (PVLG…SGAL), 93-113 (IPAG…LSGF), 116-136 (VILG…TIFF), 152-172 (NIVI…ACVT), 180-200 (TVLF…LALF), 221-241 (VTKH…ILPS), 252-271 (LVAA…VWRM), and 289-309 (IFYL…SIFV).

Belongs to the UbiA prenyltransferase family. Protoheme IX farnesyltransferase subfamily.

Its subcellular location is the cell inner membrane. It catalyses the reaction heme b + (2E,6E)-farnesyl diphosphate + H2O = Fe(II)-heme o + diphosphate. It participates in porphyrin-containing compound metabolism; heme O biosynthesis; heme O from protoheme: step 1/1. Functionally, converts heme B (protoheme IX) to heme O by substitution of the vinyl group on carbon 2 of heme B porphyrin ring with a hydroxyethyl farnesyl side group. The protein is Protoheme IX farnesyltransferase of Rhizobium leguminosarum bv. trifolii (strain WSM2304).